A 131-amino-acid chain; its full sequence is Glycine cleavage system H protein (131 aa).

Positions 24-106 (TVTIGITDHA…YEDGWIIKLK (83 aa)) constitute a Lipoyl-binding domain. Lys65 is modified (N6-lipoyllysine).

Belongs to the GcvH family. The glycine cleavage system is composed of four proteins: P, T, L and H. (R)-lipoate is required as a cofactor.

Its function is as follows. The glycine cleavage system catalyzes the degradation of glycine. The H protein shuttles the methylamine group of glycine from the P protein to the T protein. This chain is Glycine cleavage system H protein, found in Chromohalobacter salexigens (strain ATCC BAA-138 / DSM 3043 / CIP 106854 / NCIMB 13768 / 1H11).